The primary structure comprises 196 residues: Holliday junction branch migration complex subunit RuvA (196 aa).

The segment at 1-63 is domain I; it reads MIASVRGEVL…EDSMTLYGFP (63 aa). The segment at 64–138 is domain II; sequence DGETRDLFLT…DKVGVAATGG (75 aa). The interval 138-142 is flexible linker; that stretch reads GALST. The tract at residues 143-196 is domain III; sequence NGHAVRSPVVEALVGLGFAAKQAEEATDTVLAANHDATTSSALRSALSLLGKAR.

This sequence belongs to the RuvA family. As to quaternary structure, homotetramer. Forms an RuvA(8)-RuvB(12)-Holliday junction (HJ) complex. HJ DNA is sandwiched between 2 RuvA tetramers; dsDNA enters through RuvA and exits via RuvB. An RuvB hexamer assembles on each DNA strand where it exits the tetramer. Each RuvB hexamer is contacted by two RuvA subunits (via domain III) on 2 adjacent RuvB subunits; this complex drives branch migration. In the full resolvosome a probable DNA-RuvA(4)-RuvB(12)-RuvC(2) complex forms which resolves the HJ.

The protein resides in the cytoplasm. Its function is as follows. The RuvA-RuvB-RuvC complex processes Holliday junction (HJ) DNA during genetic recombination and DNA repair, while the RuvA-RuvB complex plays an important role in the rescue of blocked DNA replication forks via replication fork reversal (RFR). RuvA specifically binds to HJ cruciform DNA, conferring on it an open structure. The RuvB hexamer acts as an ATP-dependent pump, pulling dsDNA into and through the RuvAB complex. HJ branch migration allows RuvC to scan DNA until it finds its consensus sequence, where it cleaves and resolves the cruciform DNA. The protein is Holliday junction branch migration complex subunit RuvA of Mycobacterium bovis (strain ATCC BAA-935 / AF2122/97).